The primary structure comprises 401 residues: Short chain dehydrogenase/reductase dpchH (401 aa).

Residue asparagine 16 is glycosylated (N-linked (GlcNAc...) asparagine). A helical transmembrane segment spans residues 51 to 71; the sequence is VRAVDVLFGTFLYVPLGILFL. NAD(+) contacts are provided by residues 72–80, 99–100, and 118–120; these read KKSLSGFGD, TG, and AKV. Asparagine 242 is a glycosylation site (N-linked (GlcNAc...) asparagine). Tyrosine 275 (proton acceptor) is an active-site residue. Residues 275 to 279 and 308 to 310 contribute to the NAD(+) site; these read YGTSK and GTI. The N-linked (GlcNAc...) asparagine glycan is linked to asparagine 386.

The protein localises to the membrane. It participates in secondary metabolite biosynthesis; terpenoid biosynthesis. Functionally, short chain dehydrogenase/reductase; part of the gene cluster that mediates the biosynthesis of the diterpenoid pyrones higginsianins A and B. The first step of the pathway is the synthesis of the alpha-pyrone moiety by the polyketide synthase dpchA via condensation of one acetyl-CoA starter unit with 3 malonyl-CoA units and 2 methylations. The alpha-pyrone is then combined with geranylgeranyl pyrophosphate (GGPP) formed by the GGPP synthase dpchD through the action of the prenyltransferase dpchC to yield a linear alpha-pyrone diterpenoid. Subsequent steps in the diterpenoid pyrone biosynthetic pathway involve the decalin core formation, which is initiated by the epoxidation of the C10-C11 olefin by the FAD-dependent oxidoreductase dpchE, and is followed by a cyclization cascade catalyzed by the terpene cyclase dpchB. The short chain dehydrogenase/reductase dpchG then oxidizes the 8S hydroxy group to a ketone and the short chain dehydrogenase/reductase dpchH reduces the ketone to the 8R hydroxy group to yield higginsianin B. Finally, the FAD-dependent oxidoreductase dpchF converts higginsianin B into higginsianin A. This chain is Short chain dehydrogenase/reductase dpchH, found in Colletotrichum higginsianum (strain IMI 349063) (Crucifer anthracnose fungus).